Here is a 75-residue protein sequence, read N- to C-terminus: Putative antitoxin PH1062.1 (75 aa).

It belongs to the UPF0330 family.

Possibly the antitoxin component of a type II toxin-antitoxin (TA) system. In Pyrococcus horikoshii (strain ATCC 700860 / DSM 12428 / JCM 9974 / NBRC 100139 / OT-3), this protein is Putative antitoxin PH1062.1.